Here is a 35-residue protein sequence, read N- to C-terminus: Potassium channel toxin alpha-KTx 6.1 (35 aa).

Disulfide bonds link cysteine 4–cysteine 25, cysteine 10–cysteine 30, cysteine 14–cysteine 32, and cysteine 20–cysteine 35.

This sequence belongs to the short scorpion toxin superfamily. Potassium channel inhibitor family. Alpha-KTx 06 subfamily. As to expression, expressed by the venom gland.

It localises to the secreted. In terms of biological role, potently and reversibly inhibits the insect voltage-gated Shaker (Sh) potassium channel (isoform alpha (B)), the mammalian voltage-gated potassium channels Kv1.2/KCNA2 (IC(50)=0.44 nM), and the calcium-activated potassium channel KCa2.3/KCNN3 (Kd=330 nM). Its effect on Kv1.3/KCNA3 is controversial, since this channel is voltage-independently inhibited in PubMed:9464266, but is not affected in PubMed:10931199. Furthermore, this toxin competes with apamin (a small conductance calcium-activated potassium channel inhibitor) for binding to rat brain synaptosomes. The polypeptide is Potassium channel toxin alpha-KTx 6.1 (Pandinus imperator (Emperor scorpion)).